Here is a 402-residue protein sequence, read N- to C-terminus: mRNA cap guanine-N(7) methyltransferase (402 aa).

Positions 1-11 are enriched in basic and acidic residues; it reads MDHVLNPEEKV. The disordered stretch occupies residues 1 to 75; it reads MDHVLNPEEK…PRLEEGHGSL (75 aa). The segment covering 35 to 50 has biased composition (polar residues); sequence PKLSASEKSLPGNTKS. Residues 55-72 are compositionally biased toward basic and acidic residues; the sequence is KAAEPDSPPKRPRLEEGH. The 308-residue stretch at 94–401 folds into the mRNA cap 0 methyltransferase domain; that stretch reads SRIFHLRNFN…IYLLFAFEKQ (308 aa). 103–104 contributes to the mRNA binding site; sequence NN. 6 residues coordinate S-adenosyl-L-methionine: Lys107, Gly131, Asp153, Asp187, Gln210, and Tyr215.

This sequence belongs to the class I-like SAM-binding methyltransferase superfamily. mRNA cap 0 methyltransferase family.

It localises to the nucleus. It catalyses the reaction a 5'-end (5'-triphosphoguanosine)-ribonucleoside in mRNA + S-adenosyl-L-methionine = a 5'-end (N(7)-methyl 5'-triphosphoguanosine)-ribonucleoside in mRNA + S-adenosyl-L-homocysteine. In terms of biological role, catalytic subunit of the mRNA-capping methyltransferase RNMT:RAMAC complex that methylates the N7 position of the added guanosine to the 5'-cap structure of mRNAs. Binds RNA containing 5'-terminal GpppC. This is mRNA cap guanine-N(7) methyltransferase (rnmt) from Xenopus laevis (African clawed frog).